Consider the following 286-residue polypeptide: Pyridoxal kinase PdxY (286 aa).

Residues S9 and 44–45 (TQ) each bind substrate. Residues D111, A143, E148, K181, and 208-211 (RPLV) each bind ATP. A substrate-binding site is contributed by D223.

It belongs to the pyridoxine kinase family. PdxY subfamily. In terms of assembly, homodimer. Mg(2+) serves as cofactor.

The enzyme catalyses pyridoxal + ATP = pyridoxal 5'-phosphate + ADP + H(+). The protein operates within cofactor metabolism; pyridoxal 5'-phosphate salvage; pyridoxal 5'-phosphate from pyridoxal: step 1/1. Functionally, pyridoxal kinase involved in the salvage pathway of pyridoxal 5'-phosphate (PLP). Catalyzes the phosphorylation of pyridoxal to PLP. The polypeptide is Pyridoxal kinase PdxY (Yersinia pestis bv. Antiqua (strain Antiqua)).